A 186-amino-acid chain; its full sequence is TATA box-binding protein-like 1 (186 aa).

Belongs to the TBP family.

Its subcellular location is the cytoplasm. It localises to the nucleus. Functionally, part of a specialized transcription system that mediates the transcription of most ribosomal proteins through the 5'-TCT-3' motif which is a core promoter element at these genes. Seems to also mediate the transcription of NF1. Does not bind the TATA box. Members of the TBP family are differentially required to regulate transcription and development during early embryogenesis. The sequence is that of TATA box-binding protein-like 1 from Danio rerio (Zebrafish).